We begin with the raw amino-acid sequence, 77 residues long: Large ribosomal subunit protein uL29 (77 aa).

Belongs to the universal ribosomal protein uL29 family.

In Mycobacterium sp. (strain JLS), this protein is Large ribosomal subunit protein uL29.